A 254-amino-acid polypeptide reads, in one-letter code: Glucosamine-6-phosphate deaminase (254 aa).

Asp63 acts as the Proton acceptor; for enolization step in catalysis. Asn129 functions as the For ring-opening step in the catalytic mechanism. Catalysis depends on His131, which acts as the Proton acceptor; for ring-opening step. Glu136 serves as the catalytic For ring-opening step.

This sequence belongs to the glucosamine/galactosamine-6-phosphate isomerase family. NagB subfamily.

The enzyme catalyses alpha-D-glucosamine 6-phosphate + H2O = beta-D-fructose 6-phosphate + NH4(+). It functions in the pathway amino-sugar metabolism; N-acetylneuraminate degradation; D-fructose 6-phosphate from N-acetylneuraminate: step 5/5. Catalyzes the reversible isomerization-deamination of glucosamine 6-phosphate (GlcN6P) to form fructose 6-phosphate (Fru6P) and ammonium ion. This chain is Glucosamine-6-phosphate deaminase, found in Exiguobacterium sp. (strain ATCC BAA-1283 / AT1b).